The primary structure comprises 35 residues: Natriuretic peptide TNPb (35 aa).

The cysteines at positions 9 and 25 are disulfide-linked.

In terms of tissue distribution, expressed by the venom gland.

The protein resides in the secreted. Its function is as follows. Snake venom natriuretic peptide that exhibits vasoactive and probable hypotensive activity. Is only weakly active on natriuretic peptide receptor-C (NPR3). Stimulates cGMP production through the natriuretic peptide receptor 1 (NPR1) with moderate potencies for the rat NPR1 (EC(50)=1200 nM), and very weak potencies over human NPR1 (30% activation at 10 uM). In vivo, does not impact systolic and diastolic blood pressure, as well as heart rate, when intravenously injected in conscious rabbits. Does not affect the bradycardia due to cardiac afferent stimulation (Bezold-Jarisch reflex). This chain is Natriuretic peptide TNPb, found in Oxyuranus microlepidotus (Inland taipan).